Consider the following 577-residue polypeptide: Guanine nucleotide-binding protein-like 3-like protein (577 aa).

Over residues 1–30 (MMKIRHKNKKPGKGSKGCKKPARQNGKKVT) the composition is skewed to basic residues. A disordered region spans residues 1–75 (MMKIRHKNKK…VAREQERQRH (75 aa)). The segment at 9–28 (KKPGKGSKGCKKPARQNGKK) is required for nucleolar localization. The segment covering 42 to 75 (GNDHASREAELKKKRVEEMREKQQVAREQERQRH) has biased composition (basic and acidic residues). Residues 43–103 (NDHASREAEL…QKEEVLQELN (61 aa)) are a coiled coil. Positions 118-304 (YKEFRKVVEY…LLDAPGIVPG (187 aa)) constitute a CP-type G domain. GTP is bound by residues 166-169 (NKID), 253-260 (GLPNVGKS), and 297-300 (DAPG).

The protein belongs to the TRAFAC class YlqF/YawG GTPase family. Interacts with MDM2; this interaction, which occurs in the nucleoplasm, stabilizes MDM2. Indirectly interacts with TP53, via MDM2-binding. Interacts with TERF1; this interaction probably occurs in the nucleoplasm and is increased during mitosis, when the nucleolus is disassembled. This binding may promote TERF1 homodimerization. Interacts with TERT.

It is found in the nucleus. Its subcellular location is the nucleolus. Functionally, stabilizes TERF1 telomeric association by preventing TERF1 recruitment by PML. Stabilizes TERF1 protein by preventing its ubiquitination and hence proteasomal degradation. Does so by interfering with TERF1-binding to FBXO4 E3 ubiquitin-protein ligase. Required for cell proliferation. By stabilizing TRF1 protein during mitosis, promotes metaphase-to-anaphase transition. Stabilizes MDM2 protein by preventing its ubiquitination, and hence proteasomal degradation. By acting on MDM2, may affect TP53 activity. Required for normal processing of ribosomal pre-rRNA. Binds GTP. The sequence is that of Guanine nucleotide-binding protein-like 3-like protein (Gnl3l) from Mus musculus (Mouse).